Here is a 237-residue protein sequence, read N- to C-terminus: Small ribosomal subunit protein uS3 (237 aa).

One can recognise a KH type-2 domain in the interval 39–107; it reads IRAYLMEELK…ETHLNIVEVR (69 aa). The disordered stretch occupies residues 213–237; the sequence is MASERRATESDNQGGGGRDRRRENA.

Belongs to the universal ribosomal protein uS3 family. Part of the 30S ribosomal subunit. Forms a tight complex with proteins S10 and S14.

In terms of biological role, binds the lower part of the 30S subunit head. Binds mRNA in the 70S ribosome, positioning it for translation. In Sinorhizobium fredii (strain NBRC 101917 / NGR234), this protein is Small ribosomal subunit protein uS3.